We begin with the raw amino-acid sequence, 285 residues long: N(G),N(G)-dimethylarginine dimethylaminohydrolase 1 (285 aa).

The residue at position 2 (Ala2) is an N-acetylalanine. Leu30 is a binding site for substrate. Position 33 is a phosphoserine (Ser33). The substrate site is built by Asp73, Glu78, Asp79, Arg98, and Arg145. The Proton donor role is filled by His173. Cys222 is subject to S-nitrosocysteine. Val268 provides a ligand contact to substrate. Cys274 carries the S-nitrosocysteine modification. Cys274 (nucleophile) is an active-site residue. Cys274 serves as a coordination point for Zn(2+).

Belongs to the DDAH family. As to quaternary structure, monomer. As to expression, detected in red blood cells (at protein level). Widely distributed, high amounts found in kidney, brain, aorta and pancreas.

It carries out the reaction N(omega),N(omega)-dimethyl-L-arginine + H2O = dimethylamine + L-citrulline. It catalyses the reaction N(omega)-methyl-L-arginine + H2O = L-citrulline + methylamine. Inhibited by zinc ions. Hydrolyzes N(G),N(G)-dimethyl-L-arginine (ADMA) and N(G)-monomethyl-L-arginine (MMA) which act as inhibitors of NOS. Has therefore a role in the regulation of nitric oxide generation. The polypeptide is N(G),N(G)-dimethylarginine dimethylaminohydrolase 1 (Ddah1) (Rattus norvegicus (Rat)).